The following is a 279-amino-acid chain: Ribosomal RNA large subunit methyltransferase E (279 aa).

A compositionally biased stretch (basic and acidic residues) spans 1–10 (MSDDDQKPED). Positions 1 to 66 (MSDDDQKPED…MKKGGDARAA (66 aa)) are disordered. 5 residues coordinate S-adenosyl-L-methionine: Gly-136, Trp-138, Asp-154, Asp-170, and Asp-194. The active-site Proton acceptor is Lys-234.

The protein belongs to the class I-like SAM-binding methyltransferase superfamily. RNA methyltransferase RlmE family.

Its subcellular location is the cytoplasm. The catalysed reaction is uridine(2552) in 23S rRNA + S-adenosyl-L-methionine = 2'-O-methyluridine(2552) in 23S rRNA + S-adenosyl-L-homocysteine + H(+). Specifically methylates the uridine in position 2552 of 23S rRNA at the 2'-O position of the ribose in the fully assembled 50S ribosomal subunit. The sequence is that of Ribosomal RNA large subunit methyltransferase E from Maricaulis maris (strain MCS10) (Caulobacter maris).